A 260-amino-acid chain; its full sequence is Snake venom serine protease homolog 1 (260 aa).

The first 18 residues, Met-1–Ala-18, serve as a signal peptide directing secretion. The propeptide occupies Gln-19–Leu-24. In terms of domain architecture, Peptidase S1 spans Ile-25–Ala-251. 6 disulfide bridges follow: Cys-31-Cys-165, Cys-52-Cys-68, Cys-100-Cys-258, Cys-144-Cys-212, Cys-176-Cys-191, and Cys-202-Cys-227. N-linked (GlcNAc...) asparagine glycosylation is found at Asn-83, Asn-123, and Asn-124.

This sequence belongs to the peptidase S1 family. Snake venom subfamily. In terms of tissue distribution, expressed by the venom gland.

The protein resides in the secreted. Snake venom serine protease homolog that may act in the hemostasis system of the prey. In Trimeresurus stejnegeri (Chinese green tree viper), this protein is Snake venom serine protease homolog 1.